A 455-amino-acid polypeptide reads, in one-letter code: Kynurenine 3-monooxygenase (455 aa).

It belongs to the aromatic-ring hydroxylase family. KMO subfamily. FAD serves as cofactor.

The catalysed reaction is L-kynurenine + NADPH + O2 + H(+) = 3-hydroxy-L-kynurenine + NADP(+) + H2O. It participates in cofactor biosynthesis; NAD(+) biosynthesis; quinolinate from L-kynurenine: step 1/3. In terms of biological role, catalyzes the hydroxylation of L-kynurenine (L-Kyn) to form 3-hydroxy-L-kynurenine (L-3OHKyn). Required for synthesis of quinolinic acid. The sequence is that of Kynurenine 3-monooxygenase from Xanthomonas euvesicatoria pv. vesicatoria (strain 85-10) (Xanthomonas campestris pv. vesicatoria).